Consider the following 882-residue polypeptide: Envelope glycoprotein gp160 (882 aa).

The first 22 residues, 1–22, serve as a signal peptide directing secretion; it reads MGCLGNQLLIAILLLSVYGIYC. Residues 23–697 are Extracellular-facing; it reads IQYVTVFYGV…TSWIKYIQYG (675 aa). Residue Asn37 is glycosylated (N-linked (GlcNAc...) asparagine; by host). Cys44 and Cys57 are joined by a disulfide. Residues Asn70, Asn114, Asn149, Asn159, Asn174, Asn187, Asn201, Asn205, Asn215, Asn247, Asn250, Asn257, Asn281, Asn287, Asn298, Asn309, Asn319, Asn374, and Asn380 are each glycosylated (N-linked (GlcNAc...) asparagine; by host). Cystine bridges form between Cys101–Cys223, Cys108–Cys214, Cys113–Cys171, Cys236–Cys266, and Cys246–Cys258. Residues 113–170 are V1; sequence CNKSETDKWGLTKSSTTTASTTTTTTAKSVETRDIVNETSPCVVHDNCTGLEQEPMIS. Positions 171–214 are V2; that stretch reads CKFNMTGLKRDKKKEYNETWYSADLVCEQGNSTGNESRCYMNHC. The segment at 314-346 is V3; that stretch reads CRRPGNKTVLPVTIMSALVFHSQPVNERPKQAW. Cys314 and Cys347 are oxidised to a cystine. Intrachain disulfides connect Cys398-Cys462 and Cys405-Cys435. Residues 405 to 435 are V4; sequence CKMNWFLNWVEDRSLTTQKPKERHKRNYVPC. N-linked (GlcNAc...) asparagine; by host glycosylation is found at Asn463, Asn474, and Asn479. Residues 478–485 are V5; the sequence is GNQTSITM. The segment at 529-549 is fusion peptide; sequence GVFVLGFLGFLATAGSAMGAA. Positions 592-608 are immunosuppression; it reads LQTRVSAIEKYLKDQAQ. Asn628, Asn637, and Asn653 each carry an N-linked (GlcNAc...) asparagine; by host glycan. The stretch at 637-669 forms a coiled coil; the sequence is NETWQEWERKVDFLEANITALLEEAQIQQEKNM. The tract at residues 674–695 is MPER; binding to GalCer; sequence KLNSWDVFGNWFDLTSWIKYIQ. A helical transmembrane segment spans residues 698-718; it reads IYIIVGVILLRIVIYIVQMLA. Topologically, residues 719–882 are cytoplasmic; the sequence is RLRQGYRPVF…IRQGLELTLL (164 aa). The YXXV motif; contains endocytosis signal motif lies at 724–727; sequence YRPV. Positions 738–761 are disordered; it reads THTQQDPALPTKEGKKGDGGGSGG. Cys790 is lipidated: S-palmitoyl cysteine; by host. The Di-leucine internalization motif signature appears at 881 to 882; the sequence is LL.

The mature envelope protein (Env) consists of a homotrimer of non-covalently associated gp120-gp41 heterodimers. The resulting complex protrudes from the virus surface as a spike. Interacts with host CD4 and CCR5. Gp120 also interacts with the C-type lectins CD209/DC-SIGN and CLEC4M/DC-SIGNR (collectively referred to as DC-SIGN(R)). In terms of assembly, the mature envelope protein (Env) consists of a homotrimer of non-covalently associated gp120-gp41 heterodimers. The resulting complex protrudes from the virus surface as a spike. In terms of processing, specific enzymatic cleavages in vivo yield mature proteins. Envelope glycoproteins are synthesized as an inactive precursor that is heavily N-glycosylated and processed likely by host cell furin in the Golgi to yield the mature SU and TM proteins. The cleavage site between SU and TM requires the minimal sequence [KR]-X-[KR]-R. Palmitoylation of the transmembrane protein and of Env polyprotein (prior to its proteolytic cleavage) is essential for their association with host cell membrane lipid rafts. Palmitoylation is therefore required for envelope trafficking to classical lipid rafts, but not for viral replication.

It is found in the virion membrane. The protein resides in the host cell membrane. The protein localises to the host endosome membrane. Its function is as follows. The surface protein gp120 (SU) attaches the virus to the host lymphoid cell by binding to the primary receptor CD4. This interaction induces a structural rearrangement creating a high affinity binding site for a chemokine coreceptor like CCR5. This peculiar 2 stage receptor-interaction strategy allows gp120 to maintain the highly conserved coreceptor-binding site in a cryptic conformation, protected from neutralizing antibodies. These changes are transmitted to the transmembrane protein gp41 and are thought to activate its fusogenic potential by unmasking its fusion peptide. Surface protein gp120 (SU) may target the virus to gut-associated lymphoid tissue (GALT) by binding host ITGA4/ITGB7 (alpha-4/beta-7 integrins), a complex that mediates T-cell migration to the GALT. Interaction between gp120 and ITGA4/ITGB7 would allow the virus to enter GALT early in the infection, infecting and killing most of GALT's resting CD4+ T-cells. This T-cell depletion is believed to be the major insult to the host immune system leading to AIDS. In terms of biological role, the surface protein gp120 is a ligand for CD209/DC-SIGN and CLEC4M/DC-SIGNR, which are respectively found on dendritic cells (DCs), and on endothelial cells of liver sinusoids and lymph node sinuses. These interactions allow capture of viral particles at mucosal surfaces by these cells and subsequent transmission to permissive cells. DCs are professional antigen presenting cells, critical for host immunity by inducing specific immune responses against a broad variety of pathogens. They act as sentinels in various tissues where they take up antigen, process it, and present it to T-cells following migration to lymphoid organs. SIV subverts the migration properties of dendritic cells to gain access to CD4+ T-cells in lymph nodes. Virus transmission to permissive T-cells occurs either in trans (without DCs infection, through viral capture and transmission), or in cis (following DCs productive infection, through the usual CD4-gp120 interaction), thereby inducing a robust infection. In trans infection, bound virions remain infectious over days and it is proposed that they are not degraded, but protected in non-lysosomal acidic organelles within the DCs close to the cell membrane thus contributing to the viral infectious potential during DCs' migration from the periphery to the lymphoid tissues. On arrival at lymphoid tissues, intact virions recycle back to DCs' cell surface allowing virus transmission to CD4+ T-cells. Virion capture also seems to lead to MHC-II-restricted viral antigen presentation, and probably to the activation of SIV-specific CD4+ cells. Functionally, the transmembrane protein gp41 (TM) acts as a class I viral fusion protein. Under the current model, the protein has at least 3 conformational states: pre-fusion native state, pre-hairpin intermediate state, and post-fusion hairpin state. During fusion of viral and target intracellular membranes, the coiled coil regions (heptad repeats) assume a trimer-of-hairpins structure, positioning the fusion peptide in close proximity to the C-terminal region of the ectodomain. The formation of this structure appears to drive apposition and subsequent fusion of viral and target cell membranes. Complete fusion occurs in host cell endosomes. The virus undergoes clathrin-dependent internalization long before endosomal fusion, thus minimizing the surface exposure of conserved viral epitopes during fusion and reducing the efficacy of inhibitors targeting these epitopes. Membranes fusion leads to delivery of the nucleocapsid into the cytoplasm. Its function is as follows. The envelope glycoprotein gp160 precursor down-modulates cell surface CD4 antigen by interacting with it in the endoplasmic reticulum and blocking its transport to the cell surface. The gp120-gp41 heterodimer allows rapid transcytosis of the virus through CD4 negative cells such as simple epithelial monolayers of the intestinal, rectal and endocervical epithelial barriers. Both gp120 and gp41 specifically recognize glycosphingolipids galactosyl-ceramide (GalCer) or 3' sulfo-galactosyl-ceramide (GalS) present in the lipid rafts structures of epithelial cells. Binding to these alternative receptors allows the rapid transcytosis of the virus through the epithelial cells. This transcytotic vesicle-mediated transport of virions from the apical side to the basolateral side of the epithelial cells does not involve infection of the cells themselves. The polypeptide is Envelope glycoprotein gp160 (env) (Simian immunodeficiency virus (isolate Mm142-83) (SIV-mac)).